The primary structure comprises 181 residues: uncharacterized protein (181 aa).

Positions 1–159 (MTVHHFTFHI…KACWMMQSLT (159 aa)) constitute an N-acetyltransferase domain.

It belongs to the acetyltransferase family.

This is an uncharacterized protein from Escherichia coli (strain K12).